The sequence spans 563 residues: Delta-1-pyrroline-5-carboxylate dehydrogenase, mitochondrial (563 aa).

A mitochondrion-targeting transit peptide spans 1 to 23 (MLPPALLRRSLLSYAWRGSGLRW). N6-succinyllysine is present on lysine 30. Serine 43 bears the Phosphoserine mark. Lysine 51 bears the N6-acetyllysine mark. N6-acetyllysine; alternate occurs at positions 92, 98, 113, 129, and 174. Lysine 92, lysine 98, lysine 113, lysine 129, and lysine 174 each carry N6-succinyllysine; alternate. NAD(+) contacts are provided by residues serine 207, lysine 232, and 285-289 (GSVPT). The active-site Proton acceptor is glutamate 313. Lysine 317 is subject to N6-acetyllysine. Residue lysine 346 is modified to N6-succinyllysine. The active-site Nucleophile is cysteine 347. 2 positions are modified to N6-acetyllysine: lysine 364 and lysine 375. Lysine 394 carries the N6-succinyllysine modification. Glutamate 446 contributes to the NAD(+) binding site. N6-acetyllysine is present on lysine 461. Lysine 508 carries the N6-acetyllysine; alternate modification. Lysine 508 carries the post-translational modification N6-succinyllysine; alternate. Serine 512 is a binding site for substrate.

The protein belongs to the aldehyde dehydrogenase family. As to quaternary structure, homodimer.

It is found in the mitochondrion matrix. The enzyme catalyses L-glutamate 5-semialdehyde + NAD(+) + H2O = L-glutamate + NADH + 2 H(+). It participates in amino-acid degradation; L-proline degradation into L-glutamate; L-glutamate from L-proline: step 2/2. Irreversible conversion of delta-1-pyrroline-5-carboxylate (P5C), derived either from proline or ornithine, to glutamate. This is a necessary step in the pathway interconnecting the urea and tricarboxylic acid cycles. The preferred substrate is glutamic gamma-semialdehyde, other substrates include succinic, glutaric and adipic semialdehydes. The protein is Delta-1-pyrroline-5-carboxylate dehydrogenase, mitochondrial (Aldh4a1) of Rattus norvegicus (Rat).